The chain runs to 109 residues: Nucleoid-associated protein MADE_1013280 (109 aa).

Residues 86 to 109 form a disordered region; the sequence is TSKEKMGDVTGGMPLPPGFKMPGF. The span at 99–109 shows a compositional bias: pro residues; it reads PLPPGFKMPGF.

Belongs to the YbaB/EbfC family. Homodimer.

Its subcellular location is the cytoplasm. It is found in the nucleoid. Binds to DNA and alters its conformation. May be involved in regulation of gene expression, nucleoid organization and DNA protection. The sequence is that of Nucleoid-associated protein MADE_1013280 from Alteromonas mediterranea (strain DSM 17117 / CIP 110805 / LMG 28347 / Deep ecotype).